Reading from the N-terminus, the 473-residue chain is Photosystem II CP43 reaction center protein (473 aa).

The propeptide occupies 1–14 (MKTLYSLRRFYPVE). N-acetylthreonine is present on Thr15. Position 15 is a phosphothreonine (Thr15). The next 5 membrane-spanning stretches (helical) occupy residues 69-93 (LFEV…PHLA), 134-155 (LIGP…KDRN), 178-200 (KALY…RKIT), 255-275 (KPFA…LSYS), and 291-312 (WFNN…ASQA). Glu367 serves as a coordination point for [CaMn4O5] cluster. The chain crosses the membrane as a helical span at residues 447-471 (RARAAAAGFEKGIDRDFEPVLSMTP).

It belongs to the PsbB/PsbC family. PsbC subfamily. PSII is composed of 1 copy each of membrane proteins PsbA, PsbB, PsbC, PsbD, PsbE, PsbF, PsbH, PsbI, PsbJ, PsbK, PsbL, PsbM, PsbT, PsbX, PsbY, PsbZ, Psb30/Ycf12, at least 3 peripheral proteins of the oxygen-evolving complex and a large number of cofactors. It forms dimeric complexes. Binds multiple chlorophylls and provides some of the ligands for the Ca-4Mn-5O cluster of the oxygen-evolving complex. It may also provide a ligand for a Cl- that is required for oxygen evolution. PSII binds additional chlorophylls, carotenoids and specific lipids. serves as cofactor.

The protein localises to the plastid. It localises to the chloroplast thylakoid membrane. In terms of biological role, one of the components of the core complex of photosystem II (PSII). It binds chlorophyll and helps catalyze the primary light-induced photochemical processes of PSII. PSII is a light-driven water:plastoquinone oxidoreductase, using light energy to abstract electrons from H(2)O, generating O(2) and a proton gradient subsequently used for ATP formation. The protein is Photosystem II CP43 reaction center protein of Cryptomeria japonica (Japanese cedar).